A 329-amino-acid chain; its full sequence is Porphobilinogen deaminase (329 aa).

S-(dipyrrolylmethanemethyl)cysteine is present on Cys-250.

This sequence belongs to the HMBS family. In terms of assembly, monomer. Dipyrromethane serves as cofactor.

The catalysed reaction is 4 porphobilinogen + H2O = hydroxymethylbilane + 4 NH4(+). It participates in porphyrin-containing compound metabolism; protoporphyrin-IX biosynthesis; coproporphyrinogen-III from 5-aminolevulinate: step 2/4. Tetrapolymerization of the monopyrrole PBG into the hydroxymethylbilane pre-uroporphyrinogen in several discrete steps. The chain is Porphobilinogen deaminase from Burkholderia pseudomallei (strain 668).